The following is a 254-amino-acid chain: 5-oxoprolinase subunit A (254 aa).

Belongs to the LamB/PxpA family. As to quaternary structure, forms a complex composed of PxpA, PxpB and PxpC.

It carries out the reaction 5-oxo-L-proline + ATP + 2 H2O = L-glutamate + ADP + phosphate + H(+). Its function is as follows. Catalyzes the cleavage of 5-oxoproline to form L-glutamate coupled to the hydrolysis of ATP to ADP and inorganic phosphate. This chain is 5-oxoprolinase subunit A, found in Carboxydothermus hydrogenoformans (strain ATCC BAA-161 / DSM 6008 / Z-2901).